The sequence spans 448 residues: Tumor necrosis factor receptor superfamily member EDAR (448 aa).

The signal sequence occupies residues 1-26 (MAHVGDCKWMSWLPVLVVSLMCSAKA). The Extracellular portion of the chain corresponds to 27 to 187 (EDSNCGENEY…LSGQGHLATA (161 aa)). 3 TNFR-Cys repeats span residues 30 to 71 (NCGE…DYGC), 73 to 113 (PCPA…DAEC), and 115 to 150 (PCLP…ECVG). 6 disulfides stabilise this stretch: Cys-31/Cys-44, Cys-47/Cys-60, Cys-50/Cys-71, Cys-74/Cys-87, Cys-93/Cys-113, and Cys-135/Cys-148. An N-linked (GlcNAc...) asparagine glycan is attached at Asn-38. Residues 188–208 (LIIAMSTIFIMAIAIVLIIMF) traverse the membrane as a helical segment. Topologically, residues 209–448 (YIMKTKPSAP…PPASPPPAAS (240 aa)) are cytoplasmic. Residues 220–229 (CCSSPPGKSA) show a composition bias toward low complexity. Residues 220 to 297 (CCSSPPGKSA…EEPAPDKQGS (78 aa)) are disordered. Positions 258–283 (LTATPTKTPKSENDASSENEQLLSRS) are enriched in polar residues. The Death domain maps to 358-431 (RMLSSTYNSE…DAVESLCADI (74 aa)).

Binds to EDARADD. Associates with TRAF1, TRAF2, TRAF3 and NIK.

It is found in the membrane. Receptor for EDA isoform TAA, but not for EDA isoform TA-2. May mediate the activation of NF-kappa-B and JNK. May promote caspase-independent cell death. The sequence is that of Tumor necrosis factor receptor superfamily member EDAR (Edar) from Mus musculus (Mouse).